Reading from the N-terminus, the 461-residue chain is Chromosomal replication initiator protein DnaA (461 aa).

The interval 1–68 is domain I, interacts with DnaA modulators; it reads MINAWAQIEH…EKAAASVLGS (68 aa). Residues 68–118 form a domain II region; the sequence is SVPTITVVSGEEPAAAPRPVQVPAQKRPAAARTSGAEQMGLPLHYASRSAD. Residues 119 to 336 are domain III, AAA+ region; the sequence is SIKWMHSFDE…SCLRNLLLKA (218 aa). Gly-162, Gly-164, Lys-165, and Thr-166 together coordinate ATP. The interval 337-461 is domain IV, binds dsDNA; the sequence is RLLNQQITMD…VERNGRIIHP (125 aa).

The protein belongs to the DnaA family. As to quaternary structure, oligomerizes as a right-handed, spiral filament on DNA at oriC.

The protein localises to the cytoplasm. In terms of biological role, plays an essential role in the initiation and regulation of chromosomal replication. ATP-DnaA binds to the origin of replication (oriC) to initiate formation of the DNA replication initiation complex once per cell cycle. Binds the DnaA box (a 9 base pair repeat at the origin) and separates the double-stranded (ds)DNA. Forms a right-handed helical filament on oriC DNA; dsDNA binds to the exterior of the filament while single-stranded (ss)DNA is stabiized in the filament's interior. The ATP-DnaA-oriC complex binds and stabilizes one strand of the AT-rich DNA unwinding element (DUE), permitting loading of DNA polymerase. After initiation quickly degrades to an ADP-DnaA complex that is not apt for DNA replication. Binds acidic phospholipids. The sequence is that of Chromosomal replication initiator protein DnaA from Oleidesulfovibrio alaskensis (strain ATCC BAA-1058 / DSM 17464 / G20) (Desulfovibrio alaskensis).